The primary structure comprises 608 residues: Glutamine--fructose-6-phosphate aminotransferase [isomerizing] (608 aa).

The active-site Nucleophile; for GATase activity is Cys-2. In terms of domain architecture, Glutamine amidotransferase type-2 spans Cys-2–Asp-217. SIS domains lie at Ala-281–Thr-422 and Leu-456–Pro-598. The For Fru-6P isomerization activity role is filled by Lys-603.

Homodimer.

Its subcellular location is the cytoplasm. The catalysed reaction is D-fructose 6-phosphate + L-glutamine = D-glucosamine 6-phosphate + L-glutamate. In terms of biological role, catalyzes the first step in hexosamine metabolism, converting fructose-6P into glucosamine-6P using glutamine as a nitrogen source. The protein is Glutamine--fructose-6-phosphate aminotransferase [isomerizing] of Agrobacterium fabrum (strain C58 / ATCC 33970) (Agrobacterium tumefaciens (strain C58)).